Here is a 305-residue protein sequence, read N- to C-terminus: Protoheme IX farnesyltransferase (305 aa).

9 consecutive transmembrane segments (helical) span residues 31 to 51 (VMSLVIFTGFVGIWLAPYSVH), 52 to 72 (PFIAGIAVVCIALGAGSAGAI), 102 to 119 (ALSFGLITGFFAVFFMAL), 123 to 145 (LLASFLLLFTIFYYICIYTIWLK), 151 to 171 (NIVIGGVSGALPPVIGYAAVS), 179 to 199 (IILFLIIFIWTPPHSWALALF), 225 to 245 (ILIYSILLFIVSLMPFFIGMN), 247 to 267 (FIYLITSGILGLVFLYYSGSL), and 284 to 304 (SIFYLFFIFLLLSSTSTISLI).

The protein belongs to the UbiA prenyltransferase family. Protoheme IX farnesyltransferase subfamily.

The protein resides in the cell inner membrane. It catalyses the reaction heme b + (2E,6E)-farnesyl diphosphate + H2O = Fe(II)-heme o + diphosphate. It functions in the pathway porphyrin-containing compound metabolism; heme O biosynthesis; heme O from protoheme: step 1/1. Functionally, converts heme B (protoheme IX) to heme O by substitution of the vinyl group on carbon 2 of heme B porphyrin ring with a hydroxyethyl farnesyl side group. This Rickettsia felis (strain ATCC VR-1525 / URRWXCal2) (Rickettsia azadi) protein is Protoheme IX farnesyltransferase.